Consider the following 72-residue polypeptide: Translation initiation factor IF-1 (72 aa).

The 72-residue stretch at 1-72 (MAKEDVIEIE…TRGRITYRFK (72 aa)) folds into the S1-like domain.

The protein belongs to the IF-1 family. As to quaternary structure, component of the 30S ribosomal translation pre-initiation complex which assembles on the 30S ribosome in the order IF-2 and IF-3, IF-1 and N-formylmethionyl-tRNA(fMet); mRNA recruitment can occur at any time during PIC assembly.

Its subcellular location is the cytoplasm. Its function is as follows. One of the essential components for the initiation of protein synthesis. Stabilizes the binding of IF-2 and IF-3 on the 30S subunit to which N-formylmethionyl-tRNA(fMet) subsequently binds. Helps modulate mRNA selection, yielding the 30S pre-initiation complex (PIC). Upon addition of the 50S ribosomal subunit IF-1, IF-2 and IF-3 are released leaving the mature 70S translation initiation complex. The sequence is that of Translation initiation factor IF-1 from Streptococcus mutans serotype c (strain ATCC 700610 / UA159).